A 387-amino-acid polypeptide reads, in one-letter code: MHRGRSASARQERDFRALMDLAHGFMASQVLFAGCALRVFDAAALGPVDAAALARSSGLSPRGTRLLLDACAGLGLLRRRRGAGPRGPAYTNSPLASTFLVAGSPLSQRSLLLYLAGTTYLCWGHLADGVREGRSQYARAVGVDADDPFTAIYRSEAERLLFMRGLQETWSLCGGRVLTAFDLSPFRVICDLGGGSGALARMAARLYPGSEVTVFETPDVVAAARAHFPPPADEDGAEPRVRFLSGDFFRSPLPPADLYVLARVLHDWADAACVELLRRVRGALRPGGAVLLVESVLSPGGAGPTRTLLLSLTMLLQARGRERTEAEYRALTARAGFSRLRLRRPRGPYHAMMAARGGGAGARSDGGGGDATSQTGSGTGSEVGAQD.

S-adenosyl-L-methionine is bound by residues Tyr153, Trp170, Glu216, 246 to 248, and Arg263; that span reads GDF. Residue His266 is the Proton donor/acceptor of the active site. Asp267 and Gln317 together coordinate substrate. The interval 354 to 387 is disordered; the sequence is AARGGGAGARSDGGGGDATSQTGSGTGSEVGAQD. Residues 356-370 are compositionally biased toward gly residues; it reads RGGGAGARSDGGGGD.

It belongs to the class I-like SAM-binding methyltransferase superfamily. Cation-independent O-methyltransferase family. Homodimer. As to expression, expressed predominantly in the pineal gland (at protein level). Very low expression, if any, in the retina.

The enzyme catalyses N-acetylserotonin + S-adenosyl-L-methionine = melatonin + S-adenosyl-L-homocysteine + H(+). It functions in the pathway aromatic compound metabolism; melatonin biosynthesis; melatonin from serotonin: step 1/2. Catalyzes the transfer of a methyl group onto N-acetylserotonin, producing melatonin (N-acetyl-5-methoxytryptamine). In Mus musculus (Mouse), this protein is Acetylserotonin O-methyltransferase (Asmt).